The sequence spans 293 residues: Cyclohexadienyl dehydrogenase (293 aa).

In terms of domain architecture, Prephenate/arogenate dehydrogenase spans K5–P293. H6–V30 contacts NAD(+).

Belongs to the prephenate/arogenate dehydrogenase family. As to quaternary structure, homodimer.

It carries out the reaction L-arogenate + NAD(+) = L-tyrosine + CO2 + NADH. It catalyses the reaction prephenate + NAD(+) = 3-(4-hydroxyphenyl)pyruvate + CO2 + NADH. It participates in amino-acid biosynthesis; L-tyrosine biosynthesis; (4-hydroxyphenyl)pyruvate from prephenate (NAD(+) route): step 1/1. It functions in the pathway amino-acid biosynthesis; L-tyrosine biosynthesis; L-tyrosine from L-arogenate (NAD(+) route): step 1/1. With respect to regulation, insensitive to feedback inhibition by L-tyrosine. Functionally, can function as either prephenate dehydrogenase or as arogenate dehydrogenase in the biosynthesis of L-tyrosine. Catalyzes two analogous reactions: converts prephenate to 4-hydroxyphenylpyruvate and transforms L-arogenate to L-tyrosine. Is not able to utilize NADP(+) instead of NAD(+) as cosubstrate. This is Cyclohexadienyl dehydrogenase from Zymomonas mobilis subsp. mobilis (strain ATCC 31821 / ZM4 / CP4).